We begin with the raw amino-acid sequence, 407 residues long: Cation efflux system protein CusB (407 aa).

The N-terminal stretch at 1 to 28 (MKKIALIIGSMIAGGIISAAGFTWVAKA) is a signal peptide.

This sequence belongs to the membrane fusion protein (MFP) (TC 8.A.1) family. In terms of assembly, the cus efflux system is composed of CusA, CusB, CusC and CusF.

Functionally, part of a cation efflux system that mediates resistance to copper and silver. In Escherichia coli (strain K12), this protein is Cation efflux system protein CusB (cusB).